The following is a 968-amino-acid chain: uncharacterized protein (968 aa).

The first 27 residues, 1 to 27, serve as a signal peptide directing secretion; sequence MHSWKKKLVVSQLALACTLAITSQANA. In terms of domain architecture, Autotransporter spans 703–968; sequence GLADNGGAWV…SANVGVKYTW (266 aa).

This is an uncharacterized protein from Escherichia coli (strain K12).